Here is a 149-residue protein sequence, read N- to C-terminus: Calmodulin-1 (149 aa).

Ala-2 is modified (N-acetylalanine). 4 EF-hand domains span residues 8-43, 44-79, 81-116, and 117-149; these read DQIS…LGQN, PTEA…KMKD, DSEE…LGEK, and LTDE…MMAK. Residues Asp-21, Asp-23, Asp-25, Cys-27, Glu-32, Asp-57, Asp-59, Asn-61, Thr-63, Glu-68, Asp-94, Asp-96, Asn-98, and Glu-105 each contribute to the Ca(2+) site. Lys-116 is modified (N6,N6,N6-trimethyllysine). Asp-130, Asp-132, Asp-134, Gln-136, and Glu-141 together coordinate Ca(2+).

It belongs to the calmodulin family.

In terms of biological role, calmodulin mediates the control of a large number of enzymes, ion channels and other proteins by Ca(2+). Among the enzymes to be stimulated by the calmodulin-Ca(2+) complex are a number of protein kinases and phosphatases. This Petunia hybrida (Petunia) protein is Calmodulin-1 (CAM81).